The primary structure comprises 180 residues: Large ribosomal subunit protein uL5 (180 aa).

This sequence belongs to the universal ribosomal protein uL5 family. Part of the 50S ribosomal subunit; part of the 5S rRNA/L5/L18/L25 subcomplex. Contacts the 5S rRNA and the P site tRNA. Forms a bridge to the 30S subunit in the 70S ribosome.

Functionally, this is one of the proteins that bind and probably mediate the attachment of the 5S RNA into the large ribosomal subunit, where it forms part of the central protuberance. In the 70S ribosome it contacts protein S13 of the 30S subunit (bridge B1b), connecting the 2 subunits; this bridge is implicated in subunit movement. Contacts the P site tRNA; the 5S rRNA and some of its associated proteins might help stabilize positioning of ribosome-bound tRNAs. In Oenococcus oeni (strain ATCC BAA-331 / PSU-1), this protein is Large ribosomal subunit protein uL5.